A 612-amino-acid chain; its full sequence is Kelch repeat and BTB domain-containing protein 3 (612 aa).

The region spanning 52-119 (YDFKIIMKDE…AYTGKTKITD (68 aa)) is the BTB domain. The 101-residue stretch at 154 to 254 (CLQLLSISDS…QLSEETLQDC (101 aa)) folds into the BACK domain. Kelch repeat units lie at residues 295-341 (KYIF…SSYG), 343-403 (KIFL…MALD), 404-454 (RLFV…TCQN), 456-506 (IYVL…KAVP), and 552-599 (KIYI…VIQF).

The protein is Kelch repeat and BTB domain-containing protein 3 of Homo sapiens (Human).